The primary structure comprises 61 residues: Large ribosomal subunit protein uL30 (61 aa).

Belongs to the universal ribosomal protein uL30 family. As to quaternary structure, part of the 50S ribosomal subunit.

This chain is Large ribosomal subunit protein uL30, found in Legionella pneumophila (strain Paris).